The sequence spans 145 residues: MSRASLSLLDLAGVKPYQMKKDEEYMNEEQILHFRKILNAWHEQIVEEASRTVAHMQDEVTNFPDPADRATQEEEFSLELRNRDRERKLMKKIEATLKKLDTDDFGYCDCCGEEIGIRRLEARPTADLCIDCKTLAEIREKQVAG.

Cys108, Cys111, Cys129, and Cys132 together coordinate Zn(2+). Residues 108 to 132 (CDCCGEEIGIRRLEARPTADLCIDC) form a dksA C4-type zinc finger.

The protein belongs to the DksA family. Interacts directly with the RNA polymerase.

Its subcellular location is the cytoplasm. In terms of biological role, transcription factor that acts by binding directly to the RNA polymerase (RNAP). Required for negative regulation of rRNA expression and positive regulation of several amino acid biosynthesis promoters. Also required for regulation of fis expression. In Haemophilus influenzae (strain ATCC 51907 / DSM 11121 / KW20 / Rd), this protein is RNA polymerase-binding transcription factor DksA.